The chain runs to 351 residues: Protein Wnt-8b (351 aa).

The signal sequence occupies residues 1–22 (MFLSKPSVYICLFTCVLQLSHS). Cys54 and Cys65 are oxidised to a cystine. Residue Asn103 is glycosylated (N-linked (GlcNAc...) asparagine). Disulfide bonds link Cys104-Cys112, Cys114-Cys132, Cys180-Cys194, Cys182-Cys189, Cys256-Cys294, Cys272-Cys287, Cys291-Cys333, Cys309-Cys324, Cys311-Cys321, and Cys316-Cys317. Residue Ser186 is the site of O-palmitoleoyl serine attachment. Residue Asn259 is glycosylated (N-linked (GlcNAc...) asparagine).

This sequence belongs to the Wnt family. In terms of processing, palmitoleoylation is required for efficient binding to frizzled receptors. Depalmitoleoylation leads to Wnt signaling pathway inhibition. Post-translationally, proteolytic processing by TIKI1 and TIKI2 promotes oxidation and formation of large disulfide-bond oligomers, leading to inactivation of WNT8B. In terms of tissue distribution, expression is restricted to the brain, and more specifically to the forebrain.

It is found in the secreted. It localises to the extracellular space. Its subcellular location is the extracellular matrix. Ligand for members of the frizzled family of seven transmembrane receptors. May play an important role in the development and differentiation of certain forebrain structures, notably the hippocampus. This is Protein Wnt-8b (WNT8B) from Homo sapiens (Human).